The chain runs to 535 residues: MHDKILILDFGSQVTQLIARRVRDGRVYSEIHPYDCDPELIRKFIQEQGGKGIILSGGPSSVTEEGSPRAPQIVFELGVPVLGICYGMQTMATQLGGAVASAESLGKAREFGYSEVRAHGHTNLLKGIQDFSTSEGHGILKVWMSHGDSVTTLPSSFKLMASTESCPIAGMADEERSFYAFQFHPEVTHTIQGTAIIERFVHEICKCKPDWVMGDYIAEAVENIRKQVGDEEVILGLSGGVDSSVAAALIHRAIGDQLTCVFVDHGLLRLNEGDMVMEMFARNLGVKVIRVDAKETFMGELAGVSDPEAKRKIIGKEFVEIFQAESGKIKNAKWLAQGTIYPDVIESAGKGKKGAHTIKSHHNVGGLPEDMHLKLLEPLRELFKDEVRELGVALGLPREMVYRHPFPGPGLGVRILGEVKAEFASLLQRADAIFIEELRNTIDEVSQKSWYDLTSQAFAVFLPVKSVGVMGDGRTYEYVVALRAVQTQDFMTAHWAHLPHELLGKVFNRIINEVRGINRVVYDISGKPPATIEWE.

A Glutamine amidotransferase type-1 domain is found at 4-210; the sequence is KILILDFGSQ…VHEICKCKPD (207 aa). Residue Cys85 is the Nucleophile of the active site. Residues His184 and Glu186 contribute to the active site. The GMPS ATP-PPase domain occupies 211–403; it reads WVMGDYIAEA…LGLPREMVYR (193 aa). Residue 238–244 coordinates ATP; it reads SGGVDSS.

As to quaternary structure, homodimer.

It catalyses the reaction XMP + L-glutamine + ATP + H2O = GMP + L-glutamate + AMP + diphosphate + 2 H(+). It functions in the pathway purine metabolism; GMP biosynthesis; GMP from XMP (L-Gln route): step 1/1. Its function is as follows. Catalyzes the synthesis of GMP from XMP. This chain is GMP synthase [glutamine-hydrolyzing], found in Polynucleobacter necessarius subsp. necessarius (strain STIR1).